The following is a 1006-amino-acid chain: Zinc finger protein ZFPM1 (1006 aa).

Positions methionine 1–lysine 13 are enriched in basic residues. 2 disordered regions span residues methionine 1–glutamate 93 and serine 114–glutamate 133. The span at serine 15–valine 25 shows a compositional bias: basic and acidic residues. Positions alanine 42–proline 62 are enriched in pro residues. A compositionally biased stretch (basic and acidic residues) spans lysine 66–glutamate 79. A phosphoserine mark is found at serine 84 and serine 128. Over residues serine 121–arginine 130 the composition is skewed to polar residues. The segment at valine 235–glutamine 268 adopts a CCHC FOG-type 1 zinc-finger fold. Cysteine 243, cysteine 246, histidine 259, and cysteine 264 together coordinate Zn(2+). Serine 272 carries the post-translational modification Phosphoserine. 3 consecutive C2H2-type zinc fingers follow at residues arginine 290–histidine 314, phenylalanine 320–histidine 342, and glycine 348–histidine 371. Positions threonine 330–valine 341 are interaction with TACC3. Serine 384 carries the phosphoserine modification. Disordered regions lie at residues serine 384–leucine 409, asparagine 438–arginine 460, and alanine 473–proline 515. A compositionally biased stretch (low complexity) spans alanine 485 to proline 515. Phosphoserine is present on residues serine 491 and serine 494. The CCHC FOG-type 2 zinc-finger motif lies at proline 571–arginine 604. The Zn(2+) site is built by cysteine 579, cysteine 582, histidine 595, and cysteine 600. The segment at alanine 605–serine 681 is disordered. Over residues alanine 617 to proline 629 the composition is skewed to pro residues. A phosphoserine mark is found at serine 638 and serine 671. A CCHC FOG-type 3 zinc finger spans residues glutamate 677 to histidine 710. Positions 685, 688, 701, and 706 each coordinate Zn(2+). Positions serine 708–alanine 810 are disordered. Pro residues-rich tracts occupy residues arginine 715–alanine 735 and alanine 754–proline 769. The span at glycine 780 to alanine 791 shows a compositional bias: low complexity. The residue at position 786 (serine 786) is a Phosphoserine. Positions proline 794 to lysine 800 are interaction with CTBP2. A CCHC FOG-type 4 zinc finger spans residues proline 811–proline 844. Cysteine 819, cysteine 822, histidine 835, and cysteine 840 together coordinate Zn(2+). Residues alanine 854–histidine 877 form a C2H2-type 4 zinc finger. The segment at glycine 889–glycine 971 is disordered. Phosphoserine occurs at positions 901, 909, 914, and 935. Pro residues predominate over residues proline 925–proline 950. A CCHC FOG-type 5 zinc finger spans residues leucine 968–alanine 1001. Cysteine 976, cysteine 979, histidine 992, and cysteine 997 together coordinate Zn(2+).

This sequence belongs to the FOG (Friend of GATA) family. Interacts with corepressor CTBP2; this interaction is however not essential for corepressor activity. Interacts with the N-terminal zinc-finger of GATA1, GATA2 and probably GATA3. In terms of tissue distribution, mainly expressed in hematopoietic tissues. Also expressed in adult cerebellum, stomach, lymph node, liver and pancreas. Expressed in fetal heart, liver and spleen.

The protein resides in the nucleus. Transcription regulator that plays an essential role in erythroid and megakaryocytic cell differentiation. Essential cofactor that acts via the formation of a heterodimer with transcription factors of the GATA family GATA1, GATA2 and GATA3. Such heterodimer can both activate or repress transcriptional activity, depending on the cell and promoter context. The heterodimer formed with GATA proteins is essential to activate expression of genes such as NFE2, ITGA2B, alpha- and beta-globin, while it represses expression of KLF1. May be involved in regulation of some genes in gonads. May also be involved in cardiac development, in a non-redundant way with ZFPM2/FOG2. In Homo sapiens (Human), this protein is Zinc finger protein ZFPM1 (ZFPM1).